Reading from the N-terminus, the 289-residue chain is MFLLTPVLVAVVCILMVWIFKNADGATKRREEEPRARAEARPWVDEDLKDSTDVLQVEEDADEWQESEEEVEHVPFSHTRYPEKEMVRRSQEFYELLNKRRSVRFISNERVPMEVIDNVIKAAGTAPSGAHTEPWTFVVVKDPDVKHRIREIMEEEEKINYLKRMGPRWVTDLKKLRTNWIKEYWDTAPVLILIFKQVHGFAANGKKKIHYYNEISVSIACGIFLAALQNAGLVTVTTTPFNCGPRLRVFLNRPANEKLLMFLPVGYPSKEATVPDLPRKPLDQIMVTV.

The helical transmembrane segment at 1–21 (MFLLTPVLVAVVCILMVWIFK) threads the bilayer. Residues 100 to 104 (RRSVR) and 128 to 129 (SG) each bind FMN. 4 residues coordinate 3,5-diiodo-L-tyrosine: A130, E157, Y161, and K182. Positions 130, 157, 161, and 182 each coordinate 3-iodo-L-tyrosine. Residues 237–239 (TTT) and R279 contribute to the FMN site.

Belongs to the nitroreductase family. As to quaternary structure, homodimer. Requires FMN as cofactor. As to expression, detected in thyroid (at protein level).

Its subcellular location is the cell membrane. It is found in the cytoplasmic vesicle membrane. It catalyses the reaction 2 iodide + L-tyrosine + 2 NADP(+) = 3,5-diiodo-L-tyrosine + 2 NADPH + H(+). It carries out the reaction iodide + L-tyrosine + NADP(+) = 3-iodo-L-tyrosine + NADPH. The enzyme catalyses 3-iodo-L-tyrosine + iodide + NADP(+) = 3,5-diiodo-L-tyrosine + NADPH + H(+). The catalysed reaction is L-tyrosine + chloride + NADP(+) = 3-chloro-L-tyrosine + NADPH. It catalyses the reaction bromide + L-tyrosine + NADP(+) = 3-bromo-L-tyrosine + NADPH. Its function is as follows. Catalyzes the dehalogenation of halotyrosines such as 3-bromo-L-tyrosine, 3-chloro-L-tyrosine, 3-iodo-L-tyrosine and 3,5-diiodo-L-tyrosine. During thyroid hormone biosynthesis, facilitates iodide salvage by catalysing the oxidative NADPH-dependent deiodination of the halogenated by-products of thyroid hormone production, monoiodotyrosine (L-MIT) and diiodotyrosine (L-DIT). The scavanged iodide can then reenter the hormone-producing pathways. Acts more efficiently on 3-iodo-L-tyrosine than 3,5-diiodo-L-tyrosine. The polypeptide is Iodotyrosine deiodinase 1 (IYD) (Sus scrofa (Pig)).